A 146-amino-acid polypeptide reads, in one-letter code: D-aminoacyl-tRNA deacylase (146 aa).

Positions 138 to 139 (GP) match the Gly-cisPro motif, important for rejection of L-amino acids motif.

Belongs to the DTD family. In terms of assembly, homodimer.

Its subcellular location is the cytoplasm. It catalyses the reaction glycyl-tRNA(Ala) + H2O = tRNA(Ala) + glycine + H(+). It carries out the reaction a D-aminoacyl-tRNA + H2O = a tRNA + a D-alpha-amino acid + H(+). Its function is as follows. An aminoacyl-tRNA editing enzyme that deacylates mischarged D-aminoacyl-tRNAs. Also deacylates mischarged glycyl-tRNA(Ala), protecting cells against glycine mischarging by AlaRS. Acts via tRNA-based rather than protein-based catalysis; rejects L-amino acids rather than detecting D-amino acids in the active site. By recycling D-aminoacyl-tRNA to D-amino acids and free tRNA molecules, this enzyme counteracts the toxicity associated with the formation of D-aminoacyl-tRNA entities in vivo and helps enforce protein L-homochirality. The chain is D-aminoacyl-tRNA deacylase from Stenotrophomonas maltophilia (strain R551-3).